We begin with the raw amino-acid sequence, 1184 residues long: Non-receptor tyrosine-protein kinase TYK2 (1184 aa).

The FERM domain occupies 33–430; that stretch reads LMVLLHWPGP…GYFRLTADSS (398 aa). The interval 294-368 is disordered; it reads CYIQNSGQTA…KAGEHLTESP (75 aa). Residue tyrosine 295 is modified to Phosphotyrosine. One can recognise an SH2; atypical domain in the interval 449 to 529; sequence GIHGPLMDPF…GRSFASLGDL (81 aa). Serine 525 carries the phosphoserine modification. Residues 589-866 form the Protein kinase 1 domain; it reads ITQLSHLGQG…RTILRDLTRL (278 aa). The residue at position 604 (tyrosine 604) is a Phosphotyrosine. Serine 881 is modified (phosphoserine). One can recognise a Protein kinase 2 domain in the interval 894–1166; that stretch reads LKKIRDLGEG…PTFQNLVPIL (273 aa). Residues 900-908 and lysine 927 contribute to the ATP site; that span reads LGEGHFGKV. Residue aspartate 1020 is the Proton acceptor of the active site. At tyrosine 1051 the chain carries Phosphotyrosine; by autocatalysis. Tyrosine 1052 carries the phosphotyrosine modification.

This sequence belongs to the protein kinase superfamily. Tyr protein kinase family. JAK subfamily. As to quaternary structure, interacts (via FERM domain) with JAKMIP1. Interacts with PIK3R1; this interaction is important for cell migration. Interacts with MPL/TPOR. Phosphorylation by JAK1 at Tyr-1051 and Tyr-1052 induces kinase activation.

The enzyme catalyses L-tyrosyl-[protein] + ATP = O-phospho-L-tyrosyl-[protein] + ADP + H(+). Its activity is regulated as follows. The protein kinase 1 domain (also termed pseudokinase domain) mediates autoinhibition of the TYK2 kinase domain. Tyrosine kinase of the non-receptor type involved in numerous cytokines and interferons signaling, which regulates cell growth, development, cell migration, innate and adaptive immunity. Plays both structural and catalytic roles in numerous interleukins and interferons (IFN-alpha/beta) signaling. Associates with heterodimeric cytokine receptor complexes and activates STAT family members including STAT1, STAT3, STAT4 or STAT6. The heterodimeric cytokine receptor complexes are composed of (1) a TYK2-associated receptor chain (IFNAR1, IL12RB1, IL10RB or IL13RA1), and (2) a second receptor chain associated either with JAK1 or JAK2. In response to cytokine-binding to receptors, phosphorylates and activates receptors (IFNAR1, IL12RB1, IL10RB or IL13RA1), creating docking sites for STAT members. In turn, recruited STATs are phosphorylated by TYK2 (or JAK1/JAK2 on the second receptor chain), form homo- and heterodimers, translocate to the nucleus, and regulate cytokine/growth factor responsive genes. Negatively regulates STAT3 activity by promototing phosphorylation at a specific tyrosine that differs from the site used for signaling. This chain is Non-receptor tyrosine-protein kinase TYK2, found in Mus musculus (Mouse).